We begin with the raw amino-acid sequence, 155 residues long: SsrA-binding protein (155 aa).

The protein belongs to the SmpB family.

The protein resides in the cytoplasm. Functionally, required for rescue of stalled ribosomes mediated by trans-translation. Binds to transfer-messenger RNA (tmRNA), required for stable association of tmRNA with ribosomes. tmRNA and SmpB together mimic tRNA shape, replacing the anticodon stem-loop with SmpB. tmRNA is encoded by the ssrA gene; the 2 termini fold to resemble tRNA(Ala) and it encodes a 'tag peptide', a short internal open reading frame. During trans-translation Ala-aminoacylated tmRNA acts like a tRNA, entering the A-site of stalled ribosomes, displacing the stalled mRNA. The ribosome then switches to translate the ORF on the tmRNA; the nascent peptide is terminated with the 'tag peptide' encoded by the tmRNA and targeted for degradation. The ribosome is freed to recommence translation, which seems to be the essential function of trans-translation. The protein is SsrA-binding protein of Geobacillus sp. (strain WCH70).